Reading from the N-terminus, the 62-residue chain is MCGSYYGNYYGDHGYGCCGYEGLGYGYGSLRCGYSSCCGYGHGYGSRFFCGCGYGCGSGYYY.

Belongs to the KRTAP type 6 family. Interacts with hair keratins.

Its function is as follows. In the hair cortex, hair keratin intermediate filaments are embedded in an interfilamentous matrix, consisting of hair keratin-associated proteins (KRTAP), which are essential for the formation of a rigid and resistant hair shaft through their extensive disulfide bond cross-linking with abundant cysteine residues of hair keratins. The matrix proteins include the high-sulfur and high-glycine-tyrosine keratins. The protein is Keratin-associated protein 6-2 (KRTAP6-2) of Homo sapiens (Human).